The primary structure comprises 185 residues: Bacteriocin UviA (185 aa).

In terms of biological role, may have a role in bacteriocin secretion or immunity. The polypeptide is Bacteriocin UviA (uviA) (Clostridium perfringens).